The chain runs to 176 residues: Cell division protein ZapC (176 aa).

It belongs to the ZapC family. Interacts directly with FtsZ.

The protein localises to the cytoplasm. Contributes to the efficiency of the cell division process by stabilizing the polymeric form of the cell division protein FtsZ. Acts by promoting interactions between FtsZ protofilaments and suppressing the GTPase activity of FtsZ. The protein is Cell division protein ZapC of Pseudoalteromonas translucida (strain TAC 125).